Consider the following 107-residue polypeptide: Integration host factor subunit beta (107 aa).

A disordered region spans residues 54 to 107 (NRRPARVGRNPKSGEKVQVPEKHVPHFKPGKELRERVDGRAGEPLKNDEPEDGQ). The span at 65 to 101 (KSGEKVQVPEKHVPHFKPGKELRERVDGRAGEPLKND) shows a compositional bias: basic and acidic residues.

It belongs to the bacterial histone-like protein family. Heterodimer of an alpha and a beta chain.

Its function is as follows. This protein is one of the two subunits of integration host factor, a specific DNA-binding protein that functions in genetic recombination as well as in transcriptional and translational control. The chain is Integration host factor subunit beta from Burkholderia thailandensis (strain ATCC 700388 / DSM 13276 / CCUG 48851 / CIP 106301 / E264).